The sequence spans 349 residues: UDP-N-acetylenolpyruvoylglucosamine reductase (349 aa).

The FAD-binding PCMH-type domain occupies 26–197; it reads FDARARVAAR…VAVTFRLPKA (172 aa). Residue arginine 173 is part of the active site. Serine 249 (proton donor) is an active-site residue. Glutamate 345 is an active-site residue.

Belongs to the MurB family. The cofactor is FAD.

The protein localises to the cytoplasm. It catalyses the reaction UDP-N-acetyl-alpha-D-muramate + NADP(+) = UDP-N-acetyl-3-O-(1-carboxyvinyl)-alpha-D-glucosamine + NADPH + H(+). The protein operates within cell wall biogenesis; peptidoglycan biosynthesis. Functionally, cell wall formation. The sequence is that of UDP-N-acetylenolpyruvoylglucosamine reductase from Burkholderia pseudomallei (strain 1710b).